The sequence spans 200 residues: A-type ATP synthase subunit E (200 aa).

Belongs to the V-ATPase E subunit family. As to quaternary structure, has multiple subunits with at least A(3), B(3), C, D, E, F, H, I and proteolipid K(x).

The protein resides in the cell membrane. Its function is as follows. Component of the A-type ATP synthase that produces ATP from ADP in the presence of a proton gradient across the membrane. In Methanopyrus kandleri (strain AV19 / DSM 6324 / JCM 9639 / NBRC 100938), this protein is A-type ATP synthase subunit E.